Here is a 678-residue protein sequence, read N- to C-terminus: Putative cyclic nucleotide-gated ion channel 15 (678 aa).

At Met-1–Lys-81 the chain is on the cytoplasmic side. Residues Ile-82–Val-102 traverse the membrane as a helical segment. Residues Met-103–Leu-115 are Extracellular-facing. A helical transmembrane segment spans residues Glu-116–Ile-136. The Cytoplasmic segment spans residues Arg-137 to Ser-170. The helical transmembrane segment at Phe-171 to Pro-191 threads the bilayer. Topologically, residues Asn-192–Asn-203 are extracellular. Residues Val-204 to Ser-224 form a helical membrane-spanning segment. The Cytoplasmic segment spans residues Arg-225–Asn-245. Residues Leu-246 to Glu-266 form a helical membrane-spanning segment. At Arg-267–Ala-364 the chain is on the extracellular side. A helical transmembrane segment spans residues Gly-365–Ile-385. Residues Gly-386–Glu-678 are Cytoplasmic-facing. A nucleoside 3',5'-cyclic phosphate is bound by residues Leu-471–Leu-595 and Glu-542. Residues Phe-587 to Tyr-602 form a calmodulin-binding region. An IQ domain is found at Arg-607 to Tyr-638. Over residues Arg-656 to Gln-668 the composition is skewed to polar residues. Residues Arg-656–Glu-678 form a disordered region.

Belongs to the cyclic nucleotide-gated cation channel (TC 1.A.1.5) family. In terms of assembly, homotetramer or heterotetramer.

It is found in the cell membrane. Functionally, putative cyclic nucleotide-gated ion channel. This is Putative cyclic nucleotide-gated ion channel 15 (CNGC15) from Arabidopsis thaliana (Mouse-ear cress).